Reading from the N-terminus, the 1379-residue chain is Attractin-like protein 1 (1379 aa).

A disordered region spans residues 1–23 (METGGRARTGTPQPAAPGVWRAR). Residues 1 to 52 (METGGRARTGTPQPAAPGVWRARPAGGGGGGASSWLLDGNSWLLCYGFLYLA) form the signal peptide. Residues 53–91 (LYAQVSQSKPCERTGSCFSGRCVNSTCLCDPGWVGDQCQ) form the EGF-like 1 domain. Topologically, residues 53 to 1230 (LYAQVSQSKP…FSQHNTIMDL (1178 aa)) are extracellular. 3 cysteine pairs are disulfide-bonded: C63/C79, C81/C90, and C93/C119. The N-linked (GlcNAc...) asparagine glycan is linked to N76. The 117-residue stretch at 93 to 209 (CQGRFKLTEP…TGFNIFYSIN (117 aa)) folds into the CUB domain. N174 and N198 each carry an N-linked (GlcNAc...) asparagine glycan. One can recognise an EGF-like 2 domain in the interval 207–245 (SINSCPNNCSGHGKCTTSVSVPSQVYCECDKYWKGEACD). Intrachain disulfides connect C211–C221, C215–C233, and C235–C244. Kelch repeat units follow at residues 316 to 365 (FMWV…LYQE), 367 to 415 (IFMY…EGHS), 427 to 475 (VMII…SVYD), 480 to 531 (SIYV…LING), 533 to 591 (MLIF…VING), and 592 to 638 (SMYI…WNKN). N-linked (GlcNAc...) asparagine glycosylation is present at N380. 3 PSI domains span residues 614–657 (NCKA…AKCP), 666–709 (RCYR…TKCH), and 715–760 (ICNK…DACL). Positions 755-873 (IGDACLRVNS…TSMANGLVCE (119 aa)) constitute a C-type lectin domain. 3 N-linked (GlcNAc...) asparagine glycosylation sites follow: N763, N778, and N898. An intrachain disulfide couples C776 to C872. PSI domains are found at residues 889 to 939 (PCSL…ATCS) and 942 to 1012 (NCSG…IQCP). Cystine bridges form between C1014–C1022, C1016–C1028, C1031–C1040, C1043–C1057, C1060–C1069, C1062–C1076, C1078–C1088, and C1091–C1106. 2 consecutive Laminin EGF-like domains span residues 1014–1059 (CQCN…QCTA) and 1060–1108 (CTCS…TCYY). A glycan (N-linked (GlcNAc...) asparagine) is linked at N1157. A helical membrane pass occupies residues 1231-1251 (VQFFVTFFSCFLSLLLVAAVV). Residues 1252–1379 (WKIKQTCWAS…HLSTRQGTCV (128 aa)) are Cytoplasmic-facing. Residues 1354-1379 (KASDSKDKTSGVRNRKHLSTRQGTCV) are disordered.

Interacts with MC4R.

It localises to the membrane. Its function is as follows. May play a role in melanocortin signaling pathways that regulate energy homeostasis. The sequence is that of Attractin-like protein 1 (ATRNL1) from Homo sapiens (Human).